A 73-amino-acid polypeptide reads, in one-letter code: Large ribosomal subunit protein uL29 (73 aa).

It belongs to the universal ribosomal protein uL29 family.

This is Large ribosomal subunit protein uL29 (rpmC) from Aquifex aeolicus (strain VF5).